We begin with the raw amino-acid sequence, 195 residues long: Meiotically up-regulated gene 84 protein (195 aa).

Residues 1–84 are Cytoplasmic-facing; that stretch reads MTLTHHSTFI…IMVKVPTYEY (84 aa). A helical membrane pass occupies residues 85–105; the sequence is YGFVMYLVSMLGFGVYIVWAL. At 106–122 the chain is on the lumenal side; it reads TPAPVLKFFEIHYYLSR. The chain crosses the membrane as a helical span at residues 123 to 143; sequence WWALAIPTWLFVLVIYIHVVL. Topologically, residues 144–195 are cytoplasmic; it reads NAYNTEVLTKPFSSLECIVDQYALVGEEDGAAHGRVVDLRLCDVNKQQLEET.

It is found in the endoplasmic reticulum membrane. Has a role in meiosis. The chain is Meiotically up-regulated gene 84 protein (mug84) from Schizosaccharomyces pombe (strain 972 / ATCC 24843) (Fission yeast).